The primary structure comprises 94 residues: MAASKGNAAAAACALVLVLLAVGAEAQGGGGGECVPQLNRLLACRAYAVPGAGDPSAECCSALSSISQGCACSAISIMNSLPSRCHLSQINCSA.

The N-terminal stretch at 1 to 26 (MAASKGNAAAAACALVLVLLAVGAEA) is a signal peptide. 4 disulfide bridges follow: C34–C72, C44–C59, C60–C85, and C70–C92. N-linked (GlcNAc...) asparagine glycosylation is present at N91.

It belongs to the plant LTP family.

In terms of biological role, lipid-transfer protein that may be regulated by the transcription factor UDT1 in developing anthers and play a role in tapetum development. This Oryza sativa subsp. japonica (Rice) protein is Non-specific lipid-transfer protein C4.